The sequence spans 100 residues: Protein alpha-2 (100 aa).

The sequence is that of Protein alpha-2 from Bos taurus (Bovine).